The chain runs to 108 residues: Iron-sulfur cluster assembly protein CyaY (108 aa).

It belongs to the frataxin family.

In terms of biological role, involved in iron-sulfur (Fe-S) cluster assembly. May act as a regulator of Fe-S biogenesis. The chain is Iron-sulfur cluster assembly protein CyaY from Burkholderia mallei (strain NCTC 10247).